The following is a 258-amino-acid chain: Spindlin-2B (258 aa).

A compositionally biased stretch (low complexity) spans 1 to 23 (MKTPNAQEAEGQQTRAAAGRATG). The disordered stretch occupies residues 1-49 (MKTPNAQEAEGQQTRAAAGRATGSANMTKKKVSQKKQRGRPSSQPRRNI). A compositionally biased stretch (basic residues) spans 28 to 39 (TKKKVSQKKQRG). Tudor-like domain regions lie at residues 50–99 (VGCR…LELH), 129–178 (IGKA…YQLL), and 210–255 (IGKH…YDLV). Histone H3K4me3 and H3R8me2a binding regions lie at residues glutamate 138 and 246-248 (DFH).

The protein belongs to the SPIN/STSY family. Interacts with C11orf84/SPINDOC. As to expression, detected in all the examined tissues with highest expression in liver, followed by heart, stomach, kidney, skeletal muscle, placenta, and pancreas.

It localises to the nucleus. In terms of biological role, involved in the regulation of cell cycle progression, this activity is related to the inhibition of apoptosis following the removal of essential growth factors. Exhibits H3K4me3-binding activity. This Homo sapiens (Human) protein is Spindlin-2B (SPIN2B).